The primary structure comprises 272 residues: MHFYIPPPPISGFWLGPLYVHMYSVFMLAGALVLFELTNRRFIVLTGNREFTAFAVTSLLIPVILGARLWHVVSHTQMYEHQPFYKVFAIWQGGLGFIGGVFSGLICFFVIAKIKKVPPFTFLDALAPGILVALCFARLGNYFNGEVFGTETTLPWGLKLSHEGFKDLNVEKYFHPIFLYEIILNVFIIVILLVLEKRVFVKTVFPKGSVFAAFLVLYGLGRFALEPMRYNLQQNSFGLDLNYVGAAAMIIVGVLIACRHTIASGKLRNSGD.

4 helical membrane passes run 15–35, 53–73, 94–114, and 117–137; these read LGPLYVHMYSVFMLAGALVLF, AFAVTSLLIPVILGARLWHVV, GLGFIGGVFSGLICFFVIAKI, and VPPFTFLDALAPGILVALCFA. Arg-138 lines the a 1,2-diacyl-sn-glycero-3-phospho-(1'-sn-glycerol) pocket. The next 3 helical transmembrane spans lie at 174–194, 199–219, and 237–257; these read FHPIFLYEIILNVFIIVILLV, VFVKTVFPKGSVFAAFLVLYG, and FGLDLNYVGAAAMIIVGVLIA.

The protein belongs to the Lgt family.

The protein resides in the cell membrane. It carries out the reaction L-cysteinyl-[prolipoprotein] + a 1,2-diacyl-sn-glycero-3-phospho-(1'-sn-glycerol) = an S-1,2-diacyl-sn-glyceryl-L-cysteinyl-[prolipoprotein] + sn-glycerol 1-phosphate + H(+). It participates in protein modification; lipoprotein biosynthesis (diacylglyceryl transfer). Catalyzes the transfer of the diacylglyceryl group from phosphatidylglycerol to the sulfhydryl group of the N-terminal cysteine of a prolipoprotein, the first step in the formation of mature lipoproteins. In Tropheryma whipplei (strain TW08/27) (Whipple's bacillus), this protein is Phosphatidylglycerol--prolipoprotein diacylglyceryl transferase.